The chain runs to 326 residues: MALTASVKEELSRLDIKKSSVRKAEVSAMLRFAGGLHIISGRIVIEAEVDLASTARRLRAAIAEVYGHQSEIIVVSAGGLRRASRYVVRVVRDGEALARQTGLLDGRGRPVRGLPSAVVNGSAADAEAVWRGAFLAHGSLTEPGRSSSLEVTCPGPESALALVGAARRLDIQAKAREVRGVDRVVIRDGDTIAALLTRMGAHDALMVWEERRMRKEVRATANRLANFDDANLRRSAQAAVAAGARVDRALEILGDDVPDHLKYAGELRVAHKQASLDELGRLADPVMTKDAIAGRIRRLLAMADKRALDLGIPGTDANVTPEMLDE.

Residues 275–308 (SLDELGRLADPVMTKDAIAGRIRRLLAMADKRAL) constitute a DNA-binding region (H-T-H motif).

Belongs to the WhiA family.

Functionally, involved in cell division and chromosome segregation. This Pseudarthrobacter chlorophenolicus (strain ATCC 700700 / DSM 12829 / CIP 107037 / JCM 12360 / KCTC 9906 / NCIMB 13794 / A6) (Arthrobacter chlorophenolicus) protein is Probable cell division protein WhiA.